The primary structure comprises 483 residues: Triacylglycerol lipase ptl3 (483 aa).

One can recognise a PNPLA domain in the interval Leu-141–Thr-340. Positions Gly-145–Gly-150 match the GXGXXG motif. Residues Gly-172–Gly-176 carry the GXSXG motif. The Nucleophile role is filled by Ser-174. Asp-327 acts as the Proton acceptor in catalysis.

The protein resides in the cytoplasm. It is found in the lipid droplet. The catalysed reaction is a triacylglycerol + H2O = a diacylglycerol + a fatty acid + H(+). In terms of biological role, lipid particle-localized triacylglycerol (TAG) lipase. The lipid droplet/particle is a lipid storage compartment which serves as a depot of energy and building blocks for membrane lipid biosynthesis. Involved in the mobilization of the non-polar storage lipids triacylglycerols (TAGs) from lipid particles by hydrolysis of TAGs, releasing and supplying specific fatty acids to the appropriate metabolic pathways. This Schizosaccharomyces pombe (strain 972 / ATCC 24843) (Fission yeast) protein is Triacylglycerol lipase ptl3 (ptl3).